Consider the following 106-residue polypeptide: Replication restart protein PriB (106 aa).

One can recognise an SSB domain in the interval 4-103 (VNRLVLSGTV…LHAEQIELID (100 aa)).

Belongs to the PriB family. In terms of assembly, homodimer. Interacts with PriA and DnaT. Component of the replication restart primosome. Primosome assembly occurs via a 'hand-off' mechanism. PriA binds to replication forks, subsequently PriB then DnaT bind; DnaT then displaces ssDNA to generate the helicase loading substrate.

Functionally, involved in the restart of stalled replication forks, which reloads the replicative helicase on sites other than the origin of replication; the PriA-PriB pathway is the major replication restart pathway. During primosome assembly it facilitates complex formation between PriA and DnaT on DNA; stabilizes PriA on DNA. Stimulates the DNA unwinding activity of PriA helicase. The protein is Replication restart protein PriB of Pectobacterium carotovorum subsp. carotovorum (strain PC1).